A 325-amino-acid chain; its full sequence is Phosphatidylglycerol--prolipoprotein diacylglyceryl transferase (325 aa).

4 consecutive transmembrane segments (helical) span residues 19–39, 47–67, 93–113, and 119–139; these read IPLRGYAFCIIIGVFVAVWFG, GGKAGTVADVAVWAVPFGLVG, IWEGGLGIWGAIAFGAVGAWI, and GIPLPAWADALAPGIAIAQAI. Arg-141 contacts a 1,2-diacyl-sn-glycero-3-phospho-(1'-sn-glycerol). 3 consecutive transmembrane segments (helical) span residues 175-195, 207-225, and 237-257; these read HPTFLYESLWCIGVALLVIWA, FALYVAGYCAGRGWIEYMR, and LNVWTAIVVFILAVVYIVISA. Positions 266 to 312 are enriched in basic and acidic residues; sequence IVEPDRDATPAEKDGSGEDGSGEKGVAKADAAAKDPLTKDEPGKDAT. Residues 266–325 are disordered; that stretch reads IVEPDRDATPAEKDGSGEDGSGEKGVAKADAAAKDPLTKDEPGKDATAENAGAAGAAEKA. Residues 313–325 are compositionally biased toward low complexity; sequence AENAGAAGAAEKA.

The protein belongs to the Lgt family.

The protein localises to the cell membrane. The enzyme catalyses L-cysteinyl-[prolipoprotein] + a 1,2-diacyl-sn-glycero-3-phospho-(1'-sn-glycerol) = an S-1,2-diacyl-sn-glyceryl-L-cysteinyl-[prolipoprotein] + sn-glycerol 1-phosphate + H(+). It participates in protein modification; lipoprotein biosynthesis (diacylglyceryl transfer). In terms of biological role, catalyzes the transfer of the diacylglyceryl group from phosphatidylglycerol to the sulfhydryl group of the N-terminal cysteine of a prolipoprotein, the first step in the formation of mature lipoproteins. The polypeptide is Phosphatidylglycerol--prolipoprotein diacylglyceryl transferase (Streptomyces griseus subsp. griseus (strain JCM 4626 / CBS 651.72 / NBRC 13350 / KCC S-0626 / ISP 5235)).